A 250-amino-acid chain; its full sequence is Snake venom serine protease pictobin (250 aa).

The signal sequence occupies residues 1 to 11 (ANLLILQVSYA). Positions 12–17 (QKSSEL) are excised as a propeptide. In terms of domain architecture, Peptidase S1 spans 18–241 (VIGGDECNIN…HLHWILSIIA (224 aa)). Intrachain disulfides connect C24/C155, C42/C58, C134/C202, C166/C181, and C192/C217. H57 acts as the Charge relay system in catalysis. N-linked (GlcNAc...) asparagine glycans are attached at residues N71 and N95. The active-site Charge relay system is the D102. 2 N-linked (GlcNAc...) asparagine glycosylation sites follow: N146 and N162. S196 (charge relay system) is an active-site residue. A glycan (N-linked (GlcNAc...) asparagine) is linked at N243.

The protein belongs to the peptidase S1 family. Snake venom subfamily. As to quaternary structure, monomer. As to expression, expressed by the venom gland.

The protein resides in the secreted. Snake venom serine protease that may impair the hemostatic system of the prey. This is Snake venom serine protease pictobin from Bothrops pictus (Desert lancehead).